The sequence spans 224 residues: C-reactive protein (224 aa).

A signal peptide spans Met1 to Gly18. Gln19 carries the pyrrolidone carboxylic acid modification. The Pentraxin (PTX) domain maps to Ser23 to Pro224. A disulfide bridge connects residues Cys54 and Cys115. Residues Asp78, Asn79, Glu156, Gln157, Asp158, and Gln168 each coordinate Ca(2+).

It belongs to the pentraxin family. Homopentamer. Pentraxin (or pentaxin) have a discoid arrangement of 5 non-covalently bound subunits. Interacts with FCN1; may regulate monocyte activation by FCN1. Ca(2+) serves as cofactor. As to expression, found in plasma.

The protein localises to the secreted. Its function is as follows. Displays several functions associated with host defense: it promotes agglutination, bacterial capsular swelling, phagocytosis and complement fixation through its calcium-dependent binding to phosphorylcholine. Can interact with DNA and histones and may scavenge nuclear material released from damaged circulating cells. This chain is C-reactive protein (CRP), found in Homo sapiens (Human).